Consider the following 399-residue polypeptide: Subtilisin-like protease 4 (399 aa).

A signal peptide spans 1-19 (MVCLKTLSVFLAAFAAADA). The propeptide occupies 20 to 118 (RAVFKTQGHK…VEQDQVVRIS (99 aa)). Residues 38 to 117 (YIVVMKDGVS…YVEQDQVVRI (80 aa)) enclose the Inhibitor I9 domain. N-linked (GlcNAc...) asparagine glycosylation occurs at Asn-102. Positions 128–399 (SWGLGRVSHR…NRLLYNGSGQ (272 aa)) constitute a Peptidase S8 domain. Residues Asp-160 and His-191 each act as charge relay system in the active site. Asn-252 and Asn-308 each carry an N-linked (GlcNAc...) asparagine glycan. The active-site Charge relay system is the Ser-346. A glycan (N-linked (GlcNAc...) asparagine) is linked at Asn-395.

This sequence belongs to the peptidase S8 family.

It is found in the secreted. In terms of biological role, secreted subtilisin-like serine protease with keratinolytic activity that contributes to pathogenicity. This Trichophyton tonsurans (Scalp ringworm fungus) protein is Subtilisin-like protease 4 (SUB4).